The sequence spans 648 residues: p-hydroxybenzoic acid efflux pump subunit AaeB (648 aa).

Helical transmembrane passes span 11–31 (FACK…YFGL), 41–61 (AALV…SGAI), 65–87 (GWLR…MLLI), 91–110 (LLMI…LSSL), 125–145 (TALI…QLAL), 150–170 (EIVL…PRSV), 369–389 (LFWL…IAVV), 406–426 (FLMG…LILP), 430–450 (QSLV…GMAV), 458–478 (MGTL…GFPI), and 481–501 (FVDS…VLLV).

It belongs to the aromatic acid exporter ArAE (TC 2.A.85) family.

It localises to the cell inner membrane. In terms of biological role, forms an efflux pump with AaeA. Could function as a metabolic relief valve, allowing to eliminate certain compounds when they accumulate to high levels in the cell. This chain is p-hydroxybenzoic acid efflux pump subunit AaeB, found in Edwardsiella ictaluri (strain 93-146).